The following is a 454-amino-acid chain: Transcription factor efuD (454 aa).

The region spanning 4-111 (AKELIRITAR…NYHRAIDSIK (108 aa)) is the HTH TFE/IIEalpha-type domain. Residues 327–454 (LRTDDDGAMD…DEDELEFEDI (128 aa)) are disordered. The span at 353-372 (DQDEEEEEEDDDDDEFEDVD) shows a compositional bias: acidic residues. Over residues 387-401 (SVSTPATSAQVSSTA) the composition is skewed to polar residues. Over residues 423 to 437 (APAAAASSQAAAAES) the composition is skewed to low complexity. A compositionally biased stretch (acidic residues) spans 442–454 (SDEDEDELEFEDI).

It belongs to the TFIIE alpha subunit family.

The protein localises to the nucleus. Its function is as follows. Transcription factor; part of the gene cluster that mediates the biosynthesis of enfumafungin, a glycosylated fernene-type triterpenoid with potent antifungal activity, mediated by its interaction with beta-1,3-glucan synthase and the fungal cell wall. Is possibly responsible for the transcription regulation of one or more genes within the gene cluster. This chain is Transcription factor efuD, found in Hormonema carpetanum.